A 123-amino-acid polypeptide reads, in one-letter code: Large ribosomal subunit protein bL20 (123 aa).

It belongs to the bacterial ribosomal protein bL20 family.

Functionally, binds directly to 23S ribosomal RNA and is necessary for the in vitro assembly process of the 50S ribosomal subunit. It is not involved in the protein synthesizing functions of that subunit. The polypeptide is Large ribosomal subunit protein bL20 (Pseudothermotoga lettingae (strain ATCC BAA-301 / DSM 14385 / NBRC 107922 / TMO) (Thermotoga lettingae)).